The chain runs to 288 residues: MSSSNWIDDAFTEEELLAIDAIEASYNFSRSSSSSSSAAPTVQATTSVHGHEEDPNQIPNNIRRQLPRSITSSTSYKRFPLSRCRARNFPAMRFGGRILYSKTATEVDKRAMQLIKVLDTKRDESGIAFVGLDIEWRPSFRKGVLPGKVATVQICVDSNYCDVMHIFHSGIPQSLQHLIEDSTLVKVGIGIDGDSVKLFHDYGVSIKDVEDLSDLANQKIGGDKKWGLASLTETLVCKELLKPNRIRLGNWEFYPLSKQQLQYAATDAYASWHLYKVLKDLPDAVSGS.

The interval 30–67 (RSSSSSSSAAPTVQATTSVHGHEEDPNQIPNNIRRQLP) is disordered. 2 stretches are compositionally biased toward polar residues: residues 38 to 48 (AAPTVQATTSV) and 57 to 67 (QIPNNIRRQLP). The 3'-5' exonuclease domain occupies 129–279 (FVGLDIEWRP…ASWHLYKVLK (151 aa)).

As to quaternary structure, interacts with KU70 and KU80. Interacts with RECQL2. Mg(2+) serves as cofactor. Requires Mn(2+) as cofactor. As to expression, expressed ubiquitously.

It localises to the nucleus. Its activity is regulated as follows. Activated upon interaction with the KU heterodimer. Not stimulated by ATP. In terms of biological role, exonuclease that digests recessed strands of DNA duplexes in the 3' to 5' direction but hardly single-stranded DNA or blunt-ended duplexes. Also able to digest 3'-protruding strands and 3'-recessed strand termini of duplexes containing mismatched bases. In Arabidopsis thaliana (Mouse-ear cress), this protein is 3'-5' exonuclease (WEX).